The sequence spans 580 residues: RuBisCO large subunit-binding protein subunit alpha, chloroplastic (580 aa).

The span at 1–17 (MAQSQLAKGSRQTTGRP) shows a compositional bias: polar residues. The disordered stretch occupies residues 1-24 (MAQSQLAKGSRQTTGRPFQNKPAR).

It belongs to the chaperonin (HSP60) family. Oligomer of probably six alpha and six beta subunits.

It localises to the plastid. It is found in the chloroplast. Its function is as follows. This protein binds RuBisCO small and large subunits and is implicated in the assembly of the enzyme oligomer. The polypeptide is RuBisCO large subunit-binding protein subunit alpha, chloroplastic (Chlamydomonas reinhardtii (Chlamydomonas smithii)).